A 141-amino-acid chain; its full sequence is Ribonuclease P protein component (141 aa).

Disordered stretches follow at residues 37-56 (RTEE…VGFT) and 114-141 (RRIT…VNGK). The segment covering 114–124 (RRITAKGERRS) has biased composition (basic and acidic residues).

The protein belongs to the RnpA family. As to quaternary structure, consists of a catalytic RNA component (M1 or rnpB) and a protein subunit.

The catalysed reaction is Endonucleolytic cleavage of RNA, removing 5'-extranucleotides from tRNA precursor.. Functionally, RNaseP catalyzes the removal of the 5'-leader sequence from pre-tRNA to produce the mature 5'-terminus. It can also cleave other RNA substrates such as 4.5S RNA. The protein component plays an auxiliary but essential role in vivo by binding to the 5'-leader sequence and broadening the substrate specificity of the ribozyme. The polypeptide is Ribonuclease P protein component (Brucella melitensis biotype 1 (strain ATCC 23456 / CCUG 17765 / NCTC 10094 / 16M)).